The following is a 279-amino-acid chain: Shikimate dehydrogenase (NADP(+)) (279 aa).

Residues 19 to 21 (SRS) and threonine 66 each bind shikimate. Residue lysine 70 is the Proton acceptor of the active site. Residues asparagine 91 and aspartate 106 each contribute to the shikimate site. NADP(+) contacts are provided by residues 129-133 (GAGGA) and phenylalanine 222. A shikimate-binding site is contributed by tyrosine 224. Glycine 243 contacts NADP(+).

This sequence belongs to the shikimate dehydrogenase family. As to quaternary structure, homodimer.

It carries out the reaction shikimate + NADP(+) = 3-dehydroshikimate + NADPH + H(+). It functions in the pathway metabolic intermediate biosynthesis; chorismate biosynthesis; chorismate from D-erythrose 4-phosphate and phosphoenolpyruvate: step 4/7. In terms of biological role, involved in the biosynthesis of the chorismate, which leads to the biosynthesis of aromatic amino acids. Catalyzes the reversible NADPH linked reduction of 3-dehydroshikimate (DHSA) to yield shikimate (SA). The polypeptide is Shikimate dehydrogenase (NADP(+)) (Anaeromyxobacter sp. (strain Fw109-5)).